A 21-amino-acid polypeptide reads, in one-letter code: Bradykinin-potentiating peptide K12 (21 aa).

Positions 1 to 21 (LRDYANRVINGGPVEAAGPPA) are disordered.

As to expression, expressed by the venom gland.

It localises to the secreted. Functionally, inhibits angiotensin-converting enzyme (ACE), but does not serve as substrate for the enzyme. Potentiate bradykinin (BK) on the isolated guinea pig ileum as well as the isolated rat uterus for contraction. Also potentiates in vivo the depressor effect of BK on arterial blood pressure in the normotensive anesthetized rat. Intracerebroventricular injection into mice does not show toxic activity. This Buthus occitanus (Common European scorpion) protein is Bradykinin-potentiating peptide K12.